A 171-amino-acid polypeptide reads, in one-letter code: Large ribosomal subunit protein uL10 (171 aa).

The protein belongs to the universal ribosomal protein uL10 family. As to quaternary structure, part of the ribosomal stalk of the 50S ribosomal subunit. The N-terminus interacts with L11 and the large rRNA to form the base of the stalk. The C-terminus forms an elongated spine to which L12 dimers bind in a sequential fashion forming a multimeric L10(L12)X complex.

Its function is as follows. Forms part of the ribosomal stalk, playing a central role in the interaction of the ribosome with GTP-bound translation factors. The protein is Large ribosomal subunit protein uL10 of Maricaulis maris (strain MCS10) (Caulobacter maris).